The sequence spans 346 residues: Phosphoribosylformylglycinamidine cyclo-ligase (346 aa).

This sequence belongs to the AIR synthase family.

It is found in the cytoplasm. The enzyme catalyses 2-formamido-N(1)-(5-O-phospho-beta-D-ribosyl)acetamidine + ATP = 5-amino-1-(5-phospho-beta-D-ribosyl)imidazole + ADP + phosphate + H(+). Its pathway is purine metabolism; IMP biosynthesis via de novo pathway; 5-amino-1-(5-phospho-D-ribosyl)imidazole from N(2)-formyl-N(1)-(5-phospho-D-ribosyl)glycinamide: step 2/2. The sequence is that of Phosphoribosylformylglycinamidine cyclo-ligase from Geobacillus kaustophilus (strain HTA426).